We begin with the raw amino-acid sequence, 1008 residues long: Probable beta-galactosidase B (1008 aa).

The N-terminal stretch at 1–18 is a signal peptide; the sequence is MLLQSLFAWALAIGPCIA. Residues N20 and N23 are each glycosylated (N-linked (GlcNAc...) asparagine). Y87 contributes to the substrate binding site. N-linked (GlcNAc...) asparagine glycosylation is present at N108. N132, A133, E134, and N192 together coordinate substrate. Residue E193 is the Proton donor of the active site. The N-linked (GlcNAc...) asparagine glycan is linked to N208. Y262 contributes to the substrate binding site. C268 and C321 form a disulfide bridge. A glycan (N-linked (GlcNAc...) asparagine) is linked at N269. The active-site Nucleophile is E305. Y370 is a binding site for substrate. 10 N-linked (GlcNAc...) asparagine glycosylation sites follow: N453, N594, N624, N681, N703, N782, N788, N816, N826, and N879.

This sequence belongs to the glycosyl hydrolase 35 family.

The protein localises to the secreted. The enzyme catalyses Hydrolysis of terminal non-reducing beta-D-galactose residues in beta-D-galactosides.. In terms of biological role, cleaves beta-linked terminal galactosyl residues from gangliosides, glycoproteins, and glycosaminoglycans. The protein is Probable beta-galactosidase B (lacB) of Sclerotinia sclerotiorum (strain ATCC 18683 / 1980 / Ss-1) (White mold).